The chain runs to 442 residues: Probable glycine dehydrogenase (decarboxylating) subunit 1 (442 aa).

This sequence belongs to the GcvP family. N-terminal subunit subfamily. The glycine cleavage system is composed of four proteins: P, T, L and H. In this organism, the P 'protein' is a heterodimer of two subunits.

The catalysed reaction is N(6)-[(R)-lipoyl]-L-lysyl-[glycine-cleavage complex H protein] + glycine + H(+) = N(6)-[(R)-S(8)-aminomethyldihydrolipoyl]-L-lysyl-[glycine-cleavage complex H protein] + CO2. Functionally, the glycine cleavage system catalyzes the degradation of glycine. The P protein binds the alpha-amino group of glycine through its pyridoxal phosphate cofactor; CO(2) is released and the remaining methylamine moiety is then transferred to the lipoamide cofactor of the H protein. The chain is Probable glycine dehydrogenase (decarboxylating) subunit 1 from Phenylobacterium zucineum (strain HLK1).